A 317-amino-acid polypeptide reads, in one-letter code: Large ribosomal subunit protein uL10 (317 aa).

Over residues 280-290 (SASAAPAAGGA) the composition is skewed to low complexity. The tract at residues 280-317 (SASAAPAAGGATEKKEEAKKPESESEEEDDDMGFGLFD) is disordered. Residues 291–302 (TEKKEEAKKPES) show a composition bias toward basic and acidic residues. Phosphoserine is present on Ser-302. Phosphoserine; by CK1 is present on Ser-304.

This sequence belongs to the universal ribosomal protein uL10 family. As to quaternary structure, P0 forms a pentameric complex by interaction with dimers of P1 and P2.

Its subcellular location is the cytoplasm. It localises to the nucleus. In terms of biological role, ribosomal protein P0 is the functional equivalent of E.coli protein L10. The chain is Large ribosomal subunit protein uL10 (RpLP0) from Drosophila melanogaster (Fruit fly).